The following is a 176-amino-acid chain: ATP-dependent protease subunit HslV (176 aa).

Thr2 is an active-site residue. Positions 157, 160, and 163 each coordinate Na(+).

It belongs to the peptidase T1B family. HslV subfamily. A double ring-shaped homohexamer of HslV is capped on each side by a ring-shaped HslU homohexamer. The assembly of the HslU/HslV complex is dependent on binding of ATP.

Its subcellular location is the cytoplasm. It catalyses the reaction ATP-dependent cleavage of peptide bonds with broad specificity.. Allosterically activated by HslU binding. Its function is as follows. Protease subunit of a proteasome-like degradation complex believed to be a general protein degrading machinery. In Buchnera aphidicola subsp. Acyrthosiphon pisum (strain APS) (Acyrthosiphon pisum symbiotic bacterium), this protein is ATP-dependent protease subunit HslV.